A 764-amino-acid chain; its full sequence is Nucleolar complex-associated protein 2 (764 aa).

A coiled-coil region spans residues 3 to 69 (AKDDKKRVKK…EEELKRLQEK (67 aa)). 4 disordered regions span residues 23–67 (ELNN…KRLQ), 89–113 (ATEI…EGDD), 627–646 (AVFG…DRME), and 651–726 (AFNS…EDDA). Residues 30-41 (IDAHDIVMEQKS) show a composition bias toward basic and acidic residues. The span at 42–51 (DKKRGKKVKS) shows a compositional bias: basic residues. Basic and acidic residues predominate over residues 52–67 (KKAEAEEHEEELKRLQ). Acidic residues predominate over residues 90–113 (TEIEDDADVEPDTDLEDTEKEGDD). Positions 661–672 (DSKEKEPEEEKT) are enriched in basic and acidic residues. Residues 673–680 (KKKKRKRG) carry the Nuclear localization signal 1 motif. Over residues 673 to 682 (KKKKRKRGGK) the composition is skewed to basic residues. Residues 693 to 726 (GLGEDDVVEDFVLSSDEEEEDLFDIGGDKDEDDA) show a composition bias toward acidic residues. The short motif at 738 to 745 (SKKTKGTY) is the Nuclear localization signal 2 element.

It belongs to the NOC2 family. As to quaternary structure, component of nucleolar complexes. Forms homodimers. Interacts with RBL and NOC3 in both the nucleolus and nucleoplasm. Binds to SWA2.

It is found in the nucleus. It localises to the nucleolus. The protein localises to the nucleoplasm. Its function is as follows. Together with SWA2, probably involved in pre-ribosome export from the nucleus to the cytoplasm. This is Nucleolar complex-associated protein 2 from Arabidopsis thaliana (Mouse-ear cress).